A 932-amino-acid chain; its full sequence is Alanine--tRNA ligase (932 aa).

Histidine 623, histidine 627, cysteine 726, and histidine 730 together coordinate Zn(2+). A disordered region spans residues arginine 893–aspartate 916. The span at valine 894 to proline 910 shows a compositional bias: gly residues.

This sequence belongs to the class-II aminoacyl-tRNA synthetase family. Requires Zn(2+) as cofactor.

It localises to the cytoplasm. The enzyme catalyses tRNA(Ala) + L-alanine + ATP = L-alanyl-tRNA(Ala) + AMP + diphosphate. Catalyzes the attachment of alanine to tRNA(Ala) in a two-step reaction: alanine is first activated by ATP to form Ala-AMP and then transferred to the acceptor end of tRNA(Ala). Also edits incorrectly charged Ser-tRNA(Ala) and Gly-tRNA(Ala) via its editing domain. The protein is Alanine--tRNA ligase of Natronomonas pharaonis (strain ATCC 35678 / DSM 2160 / CIP 103997 / JCM 8858 / NBRC 14720 / NCIMB 2260 / Gabara) (Halobacterium pharaonis).